Consider the following 372-residue polypeptide: Aminomethyltransferase (372 aa).

This sequence belongs to the GcvT family. As to quaternary structure, the glycine cleavage system is composed of four proteins: P, T, L and H.

It carries out the reaction N(6)-[(R)-S(8)-aminomethyldihydrolipoyl]-L-lysyl-[protein] + (6S)-5,6,7,8-tetrahydrofolate = N(6)-[(R)-dihydrolipoyl]-L-lysyl-[protein] + (6R)-5,10-methylene-5,6,7,8-tetrahydrofolate + NH4(+). The glycine cleavage system catalyzes the degradation of glycine. The chain is Aminomethyltransferase from Burkholderia mallei (strain NCTC 10247).